A 159-amino-acid polypeptide reads, in one-letter code: Type-1 angiotensin II receptor-associated protein (159 aa).

At 1-23 (MELPAVNLKVILLGHWLLTTWGC) the chain is on the extracellular side. The chain crosses the membrane as a helical span at residues 24–44 (IVFSGSYAWANFTILALGVWA). The Cytoplasmic portion of the chain corresponds to 45–55 (VAQRDSIDAIS). A helical transmembrane segment spans residues 56–76 (MFLGGLLATIFLDIVHISIFY). The Extracellular segment spans residues 77–86 (PRVSLTDTGR). A helical membrane pass occupies residues 87–107 (FGVGMAILSLLLKPLSCCFVY). Residues 108–159 (HMYRERGGELLVHTGFLGSSQDRSAYQTIDSAEAPADPFAVPEGRSQDARGY) are Cytoplasmic-facing. The interaction with AGTR1 stretch occupies residues 110–122 (YRERGGELLVHTG). Phosphoserine is present on residues Ser-126 and Ser-127. Phosphothreonine is present on Thr-135. Residues Ser-138 and Ser-153 each carry the phosphoserine modification. The disordered stretch occupies residues 140–159 (EAPADPFAVPEGRSQDARGY).

Interacts with RACK1, and with the C-terminal region of AGTR1. Ubiquitous but more abundant in kidney, heart, pancreas and thyroid.

The protein localises to the endoplasmic reticulum membrane. It is found in the golgi apparatus membrane. Its subcellular location is the cytoplasmic vesicle membrane. Appears to be a negative regulator of type-1 angiotensin II receptor-mediated signaling by regulating receptor internalization as well as mechanism of receptor desensitization such as phosphorylation. Also induces a decrease in cell proliferation and angiotensin II-stimulated transcriptional activity. This Homo sapiens (Human) protein is Type-1 angiotensin II receptor-associated protein (AGTRAP).